Here is a 51-residue protein sequence, read N- to C-terminus: Cytochrome bd ubiquinol oxidase subunit X (51 aa).

At Met1–Tyr3 the chain is on the cytoplasmic side. Residues Phe4–Leu26 form a helical membrane-spanning segment. At Met27–His51 the chain is on the periplasmic side.

Belongs to the cytochrome ubiquinol oxidase subunit X family. In terms of assembly, may be a subunit of cytochrome ubiquinol oxidase.

The protein localises to the cell inner membrane. It carries out the reaction 2 a ubiquinol + O2(in) + 4 H(+)(in) = 2 a ubiquinone + 2 H2O(in) + 4 H(+)(out). It participates in energy metabolism; oxidative phosphorylation. Its function is as follows. Required for correct functioning of cytochrome bd oxidase. The protein is Cytochrome bd ubiquinol oxidase subunit X (cydX) of Brucella abortus (strain 2308).